The sequence spans 100 residues: Urease subunit gamma (100 aa).

The protein belongs to the urease gamma subunit family. In terms of assembly, heterotrimer of UreA (gamma), UreB (beta) and UreC (alpha) subunits. Three heterotrimers associate to form the active enzyme.

The protein resides in the cytoplasm. It catalyses the reaction urea + 2 H2O + H(+) = hydrogencarbonate + 2 NH4(+). The protein operates within nitrogen metabolism; urea degradation; CO(2) and NH(3) from urea (urease route): step 1/1. This Laribacter hongkongensis (strain HLHK9) protein is Urease subunit gamma.